Consider the following 842-residue polypeptide: Xyloglucanase Xgh74A (842 aa).

Positions 1–32 (MVKKFTSKIKAAVFAAVVAATAIFGPAISSQA) are cleaved as a signal peptide. Residue D70 is the Nucleophile of the active site. 4 BNR repeats span residues 134 to 144 (RSTDRGETWEK), 185 to 196 (WRSTDYGVTWSK), 252 to 262 (YRSTDGGVTWK), and 358 to 368 (FRSTDGGATWK). The active-site Proton donor is the D480. BNR repeat units follow at residues 533–541 (FSYDGGRNW), 577–586 (VTTDNGNSWK), 616–626 (YISTDGGLTFT), 660–671 (WRSTDGGYTFEK), and 708–718 (FRSDDAGKTWV). The Dockerin domain maps to 771 to 841 (DKGLVGDLNG…LLQAIPELPK (71 aa)).

This sequence belongs to the glycosyl hydrolase 74 family.

In terms of biological role, hydrolyzes the glucosidic bonds of unbranched Glc residues in tamarind seed xyloglucan, producing XXXG, XLXG, XXLG and XLLG. Has low activity on carboxymethylcellulose, lichenan,hydroxyethylcellulose and glucuronoxylan, and no activity on xylan, polygalaturonic acid, wheat arabinoxylan, rhamnogalacturan, curdlan, laminarin, galactomannan, galactan, arabinan and pachyman or amorphous cellulose. This Acetivibrio thermocellus (strain ATCC 27405 / DSM 1237 / JCM 9322 / NBRC 103400 / NCIMB 10682 / NRRL B-4536 / VPI 7372) (Clostridium thermocellum) protein is Xyloglucanase Xgh74A.